Consider the following 557-residue polypeptide: Dihydroxy-acid dehydratase (557 aa).

Residue Cys50 coordinates [2Fe-2S] cluster. Asp82 is a binding site for Mg(2+). Cys123 contacts [2Fe-2S] cluster. Mg(2+) is bound by residues Asp124 and Lys125. An N6-carboxylysine modification is found at Lys125. Cys195 is a [2Fe-2S] cluster binding site. Glu447 serves as a coordination point for Mg(2+). Ser473 acts as the Proton acceptor in catalysis.

Belongs to the IlvD/Edd family. Homodimer. The cofactor is [2Fe-2S] cluster. Requires Mg(2+) as cofactor.

It catalyses the reaction (2R)-2,3-dihydroxy-3-methylbutanoate = 3-methyl-2-oxobutanoate + H2O. It carries out the reaction (2R,3R)-2,3-dihydroxy-3-methylpentanoate = (S)-3-methyl-2-oxopentanoate + H2O. It functions in the pathway amino-acid biosynthesis; L-isoleucine biosynthesis; L-isoleucine from 2-oxobutanoate: step 3/4. Its pathway is amino-acid biosynthesis; L-valine biosynthesis; L-valine from pyruvate: step 3/4. Functions in the biosynthesis of branched-chain amino acids. Catalyzes the dehydration of (2R,3R)-2,3-dihydroxy-3-methylpentanoate (2,3-dihydroxy-3-methylvalerate) into 2-oxo-3-methylpentanoate (2-oxo-3-methylvalerate) and of (2R)-2,3-dihydroxy-3-methylbutanoate (2,3-dihydroxyisovalerate) into 2-oxo-3-methylbutanoate (2-oxoisovalerate), the penultimate precursor to L-isoleucine and L-valine, respectively. The chain is Dihydroxy-acid dehydratase from Nitrosospira multiformis (strain ATCC 25196 / NCIMB 11849 / C 71).